Consider the following 357-residue polypeptide: MLDRLQIIKQKFDEISDLIIQPDVIADQKRYVALNQEYKGLKSLVEKRDEYVILMANIEEANEIIADGSDADMVEMAKMQLEEAKERLPELEEEIKFLLIPKDAEDAKNVMVEIRAGTGGDEASIFAGDLFRMYTKYCENRGWRTSVVDMNEGTSGGFKEVIFEVTGEDVYGTLKFEAGVHRVQRVPQTETQGRVHTSAATVMVLPEAEEFDVQIDMNDVRVDFFCSSGPGGQSVNTTKSAVRLTHIPTGLVAQCQDQKSQHKNKDKAFGVLRSRLYEQELAKKQADDAVKRTSQVSSGDRSAKIRTYNYSQGRVTDHRIGLDVFDMDGVMNGKIQKFVDELQLVNNMEKLKESEIF.

Q233 carries the post-translational modification N5-methylglutamine.

This sequence belongs to the prokaryotic/mitochondrial release factor family. Post-translationally, methylated by PrmC. Methylation increases the termination efficiency of RF1.

The protein localises to the cytoplasm. In terms of biological role, peptide chain release factor 1 directs the termination of translation in response to the peptide chain termination codons UAG and UAA. The protein is Peptide chain release factor 1 of Flavobacterium psychrophilum (strain ATCC 49511 / DSM 21280 / CIP 103535 / JIP02/86).